A 118-amino-acid polypeptide reads, in one-letter code: MARVKRGVIARRRHKKILKLAKGYYGARSRVFRVAKQAVIKAGQYAYRDRRQRKRQFRALWIARINAGARQNGLSYSRLIAGLKKATIEIDRKVLSDLAVNEKAAFAAIVEKAKAVLA.

It belongs to the bacterial ribosomal protein bL20 family.

Binds directly to 23S ribosomal RNA and is necessary for the in vitro assembly process of the 50S ribosomal subunit. It is not involved in the protein synthesizing functions of that subunit. This is Large ribosomal subunit protein bL20 from Azotobacter vinelandii (strain DJ / ATCC BAA-1303).